We begin with the raw amino-acid sequence, 327 residues long: Phenylalanine--tRNA ligase alpha subunit (327 aa).

Residue glutamate 252 participates in Mg(2+) binding.

This sequence belongs to the class-II aminoacyl-tRNA synthetase family. Phe-tRNA synthetase alpha subunit type 1 subfamily. As to quaternary structure, tetramer of two alpha and two beta subunits. It depends on Mg(2+) as a cofactor.

The protein resides in the cytoplasm. The enzyme catalyses tRNA(Phe) + L-phenylalanine + ATP = L-phenylalanyl-tRNA(Phe) + AMP + diphosphate + H(+). This is Phenylalanine--tRNA ligase alpha subunit from Shigella dysenteriae serotype 1 (strain Sd197).